Consider the following 216-residue polypeptide: Somatotropin (216 aa).

Positions 1–26 are cleaved as a signal peptide; the sequence is MAADSQTSRLLTFTLLCLLWPQEAGA. His-45 contacts Zn(2+). Cys-78 and Cys-189 are joined by a disulfide. Ser-131 is subject to Phosphoserine. Glu-198 contacts Zn(2+). An intrachain disulfide couples Cys-206 to Cys-214.

It belongs to the somatotropin/prolactin family.

The protein resides in the secreted. Plays an important role in growth control. Its major role in stimulating body growth is to stimulate the liver and other tissues to secrete IGF1. It stimulates both the differentiation and proliferation of myoblasts. It also stimulates amino acid uptake and protein synthesis in muscle and other tissues. The sequence is that of Somatotropin (GH1) from Mesocricetus auratus (Golden hamster).